A 1429-amino-acid polypeptide reads, in one-letter code: Nitric oxide synthase 1 (1429 aa).

Residues 1–200 (MEEHTFGVQQ…LQDSGEQDEL (200 aa)) form an interaction with NOSIP region. One can recognise a PDZ domain in the interval 17–99 (SVRLFKRKVG…ETHVVLILRG (83 aa)). Disordered stretches follow at residues 114-174 (DGTP…SVSQ) and 271-298 (NNPY…SRCP). An interaction with DYNLL1/PIN region spans residues 163-240 (QGRGQGAGSV…TGIQVDRDLD (78 aa)). Positions 272–294 (NPYSENEQSPASGKQSPTKNGSP) are enriched in polar residues. Ser280 carries the phosphoserine modification. A (6R)-L-erythro-5,6,7,8-tetrahydrobiopterin-binding site is contributed by Ser334. Cys415 is a binding site for heme b. Residues Gln478, Trp587, Tyr588, and Glu592 each coordinate L-arginine. Residues Val677, Trp678, and Phe691 each contribute to the (6R)-L-erythro-5,6,7,8-tetrahydrobiopterin site. Residue Tyr706 participates in heme b binding. Positions 725–745 (KRRAIGFKKLAEAVKFSAKLM) are calmodulin-binding. The Flavodoxin-like domain occupies 755–935 (ATILYATETG…AFRTWAKKVF (181 aa)). FMN-binding residues include Thr761, Glu762, Thr763, Lys765, Ser766, Ser807, Thr808, and Gly812. Residues Ser847, Ser857, and Ser858 each carry the phosphoserine modification. Ser886, His891, Cys893, Glu919, and Gln923 together coordinate FMN. An FAD-binding FR-type domain is found at 990–1237 (KRVSAARLLS…VRGAPSFHLP (248 aa)). Arg1010 contacts NADP(+). Residues His1032, Arg1173, Tyr1174, Tyr1175, Ser1176, Thr1191, and Ala1193 each contribute to the FAD site. Ser1196 is a binding site for NADP(+). Residues Tyr1197, Val1210, Cys1211, and Ser1212 each coordinate FAD. The NADP(+) site is built by Thr1251, Arg1284, Ser1313, Arg1314, Lys1320, Tyr1322, Gln1324, Asp1357, Thr1398, and Arg1400.

The protein belongs to the NOS family. In terms of assembly, homodimer. Interacts with DLG4; the interaction possibly being prevented by the association between NOS1 and CAPON. Forms a ternary complex with CAPON and RASD1. Forms a ternary complex with CAPON and SYN1. Interacts with ZDHHC23. Interacts with NOSIP; which may impair its synaptic location. Interacts with HTR4. Interacts with VAC14. Interacts (via N-terminal domain) with DLG4 (via N-terminal tandem pair of PDZ domains). Interacts with SLC6A4. Forms a complex with ASL, ASS1 and SLC7A1; the complex regulates cell-autonomous L-arginine synthesis and citrulline recycling while channeling extracellular L-arginine to nitric oxide synthesis pathway. Interacts with DMD; localizes NOS1 to sarcolemma in muscle cells. Interacts with DYNLL1; inhibits the nitric oxide synthase activity. The cofactor is heme b. FAD serves as cofactor. It depends on FMN as a cofactor. (6R)-L-erythro-5,6,7,8-tetrahydrobiopterin is required as a cofactor. Post-translationally, ubiquitinated; mediated by STUB1/CHIP in the presence of Hsp70 and Hsp40 (in vitro). Widely expressed in the nervous system: expressed in cerebrum, olfactory bulb, hippocampus, midbrain, cerebellum, pons, medulla oblongata, and spinal cord. Also found in skeletal muscle, where it is localized beneath the sarcolemma of fast twitch muscle fibers, and in spleen, heart, kidney, and liver. N-NOS-1 and N-NOS-2 are found in all parts of the nervous system. NNOS beta and gamma occur in a region-specific manner in the brain and NNOS beta expression is developmentally regulated. NNOS Mu is only found in mature skeletal and cardiac muscles.

It is found in the cell membrane. Its subcellular location is the sarcolemma. The protein resides in the cell projection. It localises to the dendritic spine. The enzyme catalyses 2 L-arginine + 3 NADPH + 4 O2 + H(+) = 2 L-citrulline + 2 nitric oxide + 3 NADP(+) + 4 H2O. Stimulated by calcium/calmodulin. Inhibited by DYNLL1 that prevents the dimerization of the protein. Inhibited by NOSIP. In terms of biological role, produces nitric oxide (NO) which is a messenger molecule with diverse functions throughout the body. In the brain and peripheral nervous system, NO displays many properties of a neurotransmitter. Probably has nitrosylase activity and mediates cysteine S-nitrosylation of cytoplasmic target proteins such SRR. Isoform NNOS Mu may be an effector enzyme for the dystrophin complex. The protein is Nitric oxide synthase 1 of Mus musculus (Mouse).